The following is a 317-amino-acid chain: Glycine--tRNA ligase alpha subunit (317 aa).

The protein belongs to the class-II aminoacyl-tRNA synthetase family. As to quaternary structure, tetramer of two alpha and two beta subunits.

It localises to the cytoplasm. The enzyme catalyses tRNA(Gly) + glycine + ATP = glycyl-tRNA(Gly) + AMP + diphosphate. The polypeptide is Glycine--tRNA ligase alpha subunit (Lactococcus lactis subsp. cremoris (strain SK11)).